The primary structure comprises 216 residues: ATP phosphoribosyltransferase (216 aa).

It belongs to the ATP phosphoribosyltransferase family. Short subfamily. In terms of assembly, heteromultimer composed of HisG and HisZ subunits.

Its subcellular location is the cytoplasm. It catalyses the reaction 1-(5-phospho-beta-D-ribosyl)-ATP + diphosphate = 5-phospho-alpha-D-ribose 1-diphosphate + ATP. It functions in the pathway amino-acid biosynthesis; L-histidine biosynthesis; L-histidine from 5-phospho-alpha-D-ribose 1-diphosphate: step 1/9. Its function is as follows. Catalyzes the condensation of ATP and 5-phosphoribose 1-diphosphate to form N'-(5'-phosphoribosyl)-ATP (PR-ATP). Has a crucial role in the pathway because the rate of histidine biosynthesis seems to be controlled primarily by regulation of HisG enzymatic activity. The polypeptide is ATP phosphoribosyltransferase (Microcystis aeruginosa (strain NIES-843 / IAM M-2473)).